A 337-amino-acid chain; its full sequence is Vacuolar protein sorting-associated protein 26B (337 aa).

The interval 311-337 is disordered; sequence SQRFEGTSHPETRPQHSGAAAVEQEQE.

This sequence belongs to the VPS26 family. As to quaternary structure, component of the heterotrimeric retromer cargo-selective complex (CSC) which is believed to associate with variable sorting nexins to form functionally distinct retromer complex variants.

It localises to the cytoplasm. The protein localises to the membrane. Its subcellular location is the endosome. Its function is as follows. Acts as a component of the retromer cargo-selective complex (CSC). The CSC is believed to be the core functional component of retromer or respective retromer complex variants acting to prevent missorting of selected transmembrane cargo proteins into the lysosomal degradation pathway. Retromer mediates retrograde transport of cargo proteins from endosomes to the trans-Golgi network (TGN). This is Vacuolar protein sorting-associated protein 26B (vps26b) from Xenopus tropicalis (Western clawed frog).